Reading from the N-terminus, the 459-residue chain is Hypotaurine/taurine--pyruvate aminotransferase (459 aa).

K287 carries the post-translational modification N6-(pyridoxal phosphate)lysine.

This sequence belongs to the class-III pyridoxal-phosphate-dependent aminotransferase family. The cofactor is pyridoxal 5'-phosphate.

The catalysed reaction is hypotaurine + pyruvate = 2-sulfinoacetaldehyde + L-alanine. It carries out the reaction taurine + pyruvate = sulfoacetaldehyde + L-alanine. It participates in organosulfur degradation. Functionally, converts hypotaurine to alanine and sulfinoacetaldehyde, which desulfinates spontaneously to acetaldehyde and sulfite. Can also catalyze the degradation of taurine into alanine and sulfoacetaldehyde, which is stable. Has 2-fold higher aminotransferase activity with hypotaurine as the substrate. The polypeptide is Hypotaurine/taurine--pyruvate aminotransferase (Paracoccus denitrificans (strain Pd 1222)).